The following is a 270-amino-acid chain: Orotidine 5'-phosphate decarboxylase (270 aa).

The Proton donor role is filled by Lys89.

This sequence belongs to the OMP decarboxylase family. Type 2 subfamily.

It carries out the reaction orotidine 5'-phosphate + H(+) = UMP + CO2. Its pathway is pyrimidine metabolism; UMP biosynthesis via de novo pathway; UMP from orotate: step 2/2. This Dehalococcoides mccartyi (strain CBDB1) protein is Orotidine 5'-phosphate decarboxylase.